We begin with the raw amino-acid sequence, 583 residues long: CD166 antigen (583 aa).

A signal peptide spans 1–27 (MASKVSPSCRLVFCLLISAAVLRPGLG). Ig-like V-type domains follow at residues 28-120 (WYTV…TEDN) and 125-234 (PTLV…KTIY). Residues 28–527 (WYTVNSAYGD…NREKVNDQAK (500 aa)) lie on the Extracellular side of the membrane. Disulfide bonds link Cys-43-Cys-113 and Cys-157-Cys-220. 8 N-linked (GlcNAc...) asparagine glycosylation sites follow: Asn-95, Asn-167, Asn-265, Asn-306, Asn-361, Asn-457, Asn-480, and Asn-499. 3 Ig-like C2-type domains span residues 245-328 (PTEQ…TTIT), 333-409 (DLSL…ESLT), and 416-501 (PQIK…LNVS). Cystine bridges form between Cys-270-Cys-313, Cys-354-Cys-392, and Cys-435-Cys-485. The chain crosses the membrane as a helical span at residues 528-549 (LIVGIVVGLLLAALVAGVVYWL). Residues 550–583 (YMKKSKTASKHVNKDLGNMEENKKLEENNHKTEA) are Cytoplasmic-facing. The disordered stretch occupies residues 562 to 583 (NKDLGNMEENKKLEENNHKTEA). Basic and acidic residues predominate over residues 569–583 (EENKKLEENNHKTEA).

In terms of assembly, homodimer. Interacts (via extracellular domain) with CD6 (via extracellular domain). Homodimerization and interaction with CD6 involve the same region and cannot occur simultaneously. The affinity for CD6 is much higher than the affinity for self-association. Interacts (via glycosylated extracellular domain) with LGALS1 and LGALS3. Interaction with LGALS1 or LGALS3 inhibits interaction with CD6. In terms of processing, glycosylated. Detected on brain motor neurons, in differentiating retinal ganglion cells and in adult retina. Detected on leukocytes and on lymphatic endothelial cells. Detected in spleen B cells and T-cells (at protein level). Detected in adult brain and embryonic spinal cord. Expressed at high levels in the brain, and lung, and at lower levels in the liver, and the kidney, as well as by activated leukocytes.

It is found in the cell membrane. It localises to the cell projection. Its subcellular location is the axon. The protein resides in the dendrite. Its function is as follows. Cell adhesion molecule that mediates both heterotypic cell-cell contacts via its interaction with CD6, as well as homotypic cell-cell contacts. Promotes T-cell activation and proliferation via its interactions with CD6. Contributes to the formation and maturation of the immunological synapse via its interactions with CD6. Mediates homotypic interactions with cells that express ALCAM. Mediates attachment of dendritic cells onto endothelial cells via homotypic interaction. Inhibits endothelial cell migration and promotes endothelial tube formation via homotypic interactions. Required for normal organization of the lymph vessel network. Required for normal hematopoietic stem cell engraftment in the bone marrow. Plays a role in hematopoiesis; required for normal numbers of hematopoietic stem cells in bone marrow. Promotes in vitro osteoblast proliferation and differentiation. Promotes neurite extension, axon growth and axon guidance; axons grow preferentially on surfaces that contain ALCAM. Mediates outgrowth and pathfinding for retinal ganglion cell axons. This Mus musculus (Mouse) protein is CD166 antigen (Alcam).